The sequence spans 625 residues: Arginine--tRNA ligase (625 aa).

The 'HIGH' region signature appears at 128–138 (VNPTKPLHMGH).

Belongs to the class-I aminoacyl-tRNA synthetase family.

Its subcellular location is the cytoplasm. The enzyme catalyses tRNA(Arg) + L-arginine + ATP = L-arginyl-tRNA(Arg) + AMP + diphosphate. This is Arginine--tRNA ligase (argS) from Pyrococcus abyssi (strain GE5 / Orsay).